Consider the following 279-residue polypeptide: Probable endonuclease 4 (279 aa).

9 residues coordinate Zn(2+): His-69, His-109, Glu-145, Asp-179, His-182, His-216, Asp-229, His-231, and Glu-261.

Belongs to the AP endonuclease 2 family. The cofactor is Zn(2+).

The catalysed reaction is Endonucleolytic cleavage to 5'-phosphooligonucleotide end-products.. In terms of biological role, endonuclease IV plays a role in DNA repair. It cleaves phosphodiester bonds at apurinic or apyrimidinic (AP) sites, generating a 3'-hydroxyl group and a 5'-terminal sugar phosphate. The sequence is that of Probable endonuclease 4 from Desulforapulum autotrophicum (strain ATCC 43914 / DSM 3382 / VKM B-1955 / HRM2) (Desulfobacterium autotrophicum).